We begin with the raw amino-acid sequence, 135 residues long: MEKVFPHTAMTQANADPCFETGHICPIQHVVDLLDNKWSILVLRELFKGQRRTGQLLDALPGCSTKTLTLRLRQLETHGIINRDVYPEIPPRVEYSLTARGREIQPVLIAMHKLGSDWLEQESCECSLLTGEGPN.

The 99-residue stretch at 25–123 (CPIQHVVDLL…LGSDWLEQES (99 aa)) folds into the HTH hxlR-type domain.

This is an uncharacterized protein from Synechocystis sp. (strain ATCC 27184 / PCC 6803 / Kazusa).